We begin with the raw amino-acid sequence, 348 residues long: tRNA N6-adenosine threonylcarbamoyltransferase (348 aa).

Residues histidine 116 and histidine 120 each coordinate Fe cation. Substrate contacts are provided by residues 138-142, aspartate 171, glycine 184, aspartate 188, and asparagine 277; that span reads QVSGG. Residue aspartate 309 coordinates Fe cation.

Belongs to the KAE1 / TsaD family. Fe(2+) is required as a cofactor.

It localises to the cytoplasm. The catalysed reaction is L-threonylcarbamoyladenylate + adenosine(37) in tRNA = N(6)-L-threonylcarbamoyladenosine(37) in tRNA + AMP + H(+). Functionally, required for the formation of a threonylcarbamoyl group on adenosine at position 37 (t(6)A37) in tRNAs that read codons beginning with adenine. Is involved in the transfer of the threonylcarbamoyl moiety of threonylcarbamoyl-AMP (TC-AMP) to the N6 group of A37, together with TsaE and TsaB. TsaD likely plays a direct catalytic role in this reaction. The protein is tRNA N6-adenosine threonylcarbamoyltransferase of Lactobacillus johnsonii (strain CNCM I-12250 / La1 / NCC 533).